Here is a 202-residue protein sequence, read N- to C-terminus: Dephospho-CoA kinase (202 aa).

The region spanning 3–200 is the DPCK domain; the sequence is TIGLTGGIGS…QRYLTLAANR (198 aa). 11 to 16 lines the ATP pocket; sequence GSGKSA.

Belongs to the CoaE family.

It is found in the cytoplasm. It catalyses the reaction 3'-dephospho-CoA + ATP = ADP + CoA + H(+). Its pathway is cofactor biosynthesis; coenzyme A biosynthesis; CoA from (R)-pantothenate: step 5/5. Catalyzes the phosphorylation of the 3'-hydroxyl group of dephosphocoenzyme A to form coenzyme A. This Thiobacillus denitrificans (strain ATCC 25259 / T1) protein is Dephospho-CoA kinase.